The sequence spans 437 residues: Aspartic proteinase nepenthesin-1 (437 aa).

A signal peptide spans 1–24; it reads MASSLYSFLLALSIVYIFVAPTHS. A propeptide spans 25-78 (activation peptide); the sequence is TSRTALNHRHEAKVTGFQIMLEHVDSGKNLTKFQLLERAIERGSRRLQRLEAML. Asparagine 53 and asparagine 98 each carry an N-linked (GlcNAc...) asparagine glycan. One can recognise a Peptidase A1 domain in the interval 95–430; the sequence is YLMNLSIGTP…DTGNSVVSFA (336 aa). The active site involves aspartate 113. Cystine bridges form between cysteine 123–cysteine 126, cysteine 129–cysteine 203, cysteine 150–cysteine 168, cysteine 155–cysteine 163, cysteine 240–cysteine 434, and cysteine 354–cysteine 395. A glycan (N-linked (GlcNAc...) asparagine) is linked at asparagine 131. N-linked (GlcNAc...) asparagine glycans are attached at residues asparagine 198, asparagine 267, and asparagine 307. Aspartate 315 is a catalytic residue. A glycan (N-linked (GlcNAc...) asparagine) is linked at asparagine 345.

It belongs to the peptidase A1 family.

It is found in the secreted. It carries out the reaction Similar to pepsin, but also cleaves on either side of Asp and at Lys-|-Arg.. Inhibited by pepstatin and by diazoacetyl-D,L-norleucine methyl ester (DAN) in the presence of Cu(2+) ions. In terms of biological role, extracellular proteinase found in the pitcher fluid of carnivorous plants. Digest prey for nitrogen uptake. This is Aspartic proteinase nepenthesin-1 (nep1) from Nepenthes gracilis (Slender pitcher plant).